The following is a 482-amino-acid chain: Aspartic proteinase 36 (482 aa).

The N-terminal stretch at 1–27 (MVTTMDPSRISRIVAVVFVLVIQVVSG) is a signal peptide. Asn32 carries N-linked (GlcNAc...) asparagine glycosylation. The region spanning 78-429 (YFTKIKLGSP…DLENEVIGWA (352 aa)) is the Peptidase A1 domain. The active site involves Asp96. Residues Asn178, Asn204, and Asn226 are each glycosylated (N-linked (GlcNAc...) asparagine). The active site involves Asp310. Cys347 and Cys388 are joined by a disulfide. Asn432 carries an N-linked (GlcNAc...) asparagine glycan. Ser456 carries GPI-anchor amidated serine lipidation. A propeptide spans 457 to 482 (AASSVMNGTLVTLLSILIWVFHSFTS) (removed in mature form). The N-linked (GlcNAc...) asparagine glycan is linked to Asn463.

This sequence belongs to the peptidase A1 family. As to expression, highly expressed in pollen and pollen tubes. Mostly expressed in roots, flowers and inflorescence, and at lower levels in stems, seedlings and siliques.

The protein localises to the cell membrane. It localises to the cytoplasm. The protein resides in the cytosol. In terms of biological role, displays aspartic proteolytic activity. Together with A39, contributes to pollen and ovule development, including the apical cell wall constitution of the growing pollen tubes. The polypeptide is Aspartic proteinase 36 (Arabidopsis thaliana (Mouse-ear cress)).